Reading from the N-terminus, the 172-residue chain is Peptide methionine sulfoxide reductase MsrA 2 (172 aa).

Residue C12 is part of the active site.

This sequence belongs to the MsrA Met sulfoxide reductase family.

It carries out the reaction L-methionyl-[protein] + [thioredoxin]-disulfide + H2O = L-methionyl-(S)-S-oxide-[protein] + [thioredoxin]-dithiol. The catalysed reaction is [thioredoxin]-disulfide + L-methionine + H2O = L-methionine (S)-S-oxide + [thioredoxin]-dithiol. In terms of biological role, has an important function as a repair enzyme for proteins that have been inactivated by oxidation. Catalyzes the reversible oxidation-reduction of methionine sulfoxide in proteins to methionine. The polypeptide is Peptide methionine sulfoxide reductase MsrA 2 (msrA2) (Lactococcus lactis subsp. lactis (strain IL1403) (Streptococcus lactis)).